A 280-amino-acid chain; its full sequence is Protein scylla (280 aa).

Residues 39–96 (LMSKKAKTTTGGSSNGSNATATSTTTSTSSSIKHKQPAGSSNNNVGQSQSKKTKPSGS) form a disordered region. Low complexity-rich tracts occupy residues 46–69 (TTTG…TSSS) and 77–96 (GSSN…PSGS).

This sequence belongs to the DDIT4 family.

It is found in the cytoplasm. Functionally, inhibits cell growth by regulating the Tor pathway upstream of the Tsc1-Tsc2 complex and downstream of Akt1. Acts as a cell death activator during head development. This is Protein scylla (scyl) from Drosophila melanogaster (Fruit fly).